An 85-amino-acid chain; its full sequence is Large ribosomal subunit protein bL27 (85 aa).

The disordered stretch occupies residues 1–26; the sequence is MAHKKAGGSTRNGRDSESKRLGVKRF.

It belongs to the bacterial ribosomal protein bL27 family.

This Saccharophagus degradans (strain 2-40 / ATCC 43961 / DSM 17024) protein is Large ribosomal subunit protein bL27.